Reading from the N-terminus, the 256-residue chain is Enkurin (256 aa).

The SH3-binding motif lies at 83-89 (PKKPAVP). The region spanning 160-252 (KRNEEIKKAQ…IIEKHKIIYI (93 aa)) is the Enkurin domain. Residues 160 to 255 (KRNEEIKKAQ…KHKIIYIANN (96 aa)) form an interaction with TRPC proteins region. Positions 176-187 (IQENLKKAAMKR) constitute an IQ domain.

In terms of assembly, microtubule inner protein component of sperm flagellar doublet microtubules. Binds calmodulin via its IQ domain. Interacts with TRPC1, TRPC2, TRPC5, but not TRPC3. Interacts with CFAP45. As to expression, expressed in airway epithelial cells.

Its subcellular location is the cytoplasm. It localises to the cytoskeleton. The protein resides in the cilium axoneme. The protein localises to the flagellum axoneme. Its function is as follows. Adapter that functions to localize a calcium-sensitive signal transduction machinery in sperm to a calcium-permeable ion channel. Microtubule inner protein (MIP) part of the dynein-decorated doublet microtubules (DMTs) in cilia axoneme, which is required for motile cilia beating. This chain is Enkurin, found in Homo sapiens (Human).